A 213-amino-acid polypeptide reads, in one-letter code: Uracil phosphoribosyltransferase (213 aa).

5-phospho-alpha-D-ribose 1-diphosphate-binding positions include Arg78, Arg103, and 130–138 (DPMLATGGS). Uracil is bound by residues Ile193 and 198-200 (GDA). Asp199 lines the 5-phospho-alpha-D-ribose 1-diphosphate pocket.

Belongs to the UPRTase family. Requires Mg(2+) as cofactor.

It carries out the reaction UMP + diphosphate = 5-phospho-alpha-D-ribose 1-diphosphate + uracil. It functions in the pathway pyrimidine metabolism; UMP biosynthesis via salvage pathway; UMP from uracil: step 1/1. Allosterically activated by GTP. In terms of biological role, catalyzes the conversion of uracil and 5-phospho-alpha-D-ribose 1-diphosphate (PRPP) to UMP and diphosphate. The chain is Uracil phosphoribosyltransferase from Bordetella pertussis (strain Tohama I / ATCC BAA-589 / NCTC 13251).